The sequence spans 40 residues: Snaclec tokaracetin subunit beta (40 aa).

Cysteines 2 and 13 form a disulfide. A C-type lectin domain is found at 9 to 40; that stretch reads YDEHCYRVFQQKMNWEDAEKFCTQQHKGXHLX.

Belongs to the snaclec family. In terms of assembly, heterodimer of subunits alpha and beta; disulfide-linked. Expressed by the venom gland.

It is found in the secreted. Platelet antagonist that specifically and reversibly binds to a site on platelet glycoprotein Ibalpha (GP1BA) close to or identical with the site for vWF binding. It inhibits the binding of vWF to platelets and vWF-dependent shear-induced platelet aggregation. The sequence is that of Snaclec tokaracetin subunit beta from Protobothrops tokarensis (Tokara habu).